The following is a 166-amino-acid chain: 2-C-methyl-D-erythritol 2,4-cyclodiphosphate synthase (166 aa).

A divalent metal cation contacts are provided by aspartate 15 and histidine 17. 4-CDP-2-C-methyl-D-erythritol 2-phosphate contacts are provided by residues 15–17 (DIH) and 43–44 (HS). Histidine 51 contributes to the a divalent metal cation binding site. Residues 65–67 (DIG), 141–144 (TTNE), and arginine 151 contribute to the 4-CDP-2-C-methyl-D-erythritol 2-phosphate site.

Belongs to the IspF family. Homotrimer. A divalent metal cation is required as a cofactor.

It carries out the reaction 4-CDP-2-C-methyl-D-erythritol 2-phosphate = 2-C-methyl-D-erythritol 2,4-cyclic diphosphate + CMP. It participates in isoprenoid biosynthesis; isopentenyl diphosphate biosynthesis via DXP pathway; isopentenyl diphosphate from 1-deoxy-D-xylulose 5-phosphate: step 4/6. Functionally, involved in the biosynthesis of isopentenyl diphosphate (IPP) and dimethylallyl diphosphate (DMAPP), two major building blocks of isoprenoid compounds. Catalyzes the conversion of 4-diphosphocytidyl-2-C-methyl-D-erythritol 2-phosphate (CDP-ME2P) to 2-C-methyl-D-erythritol 2,4-cyclodiphosphate (ME-CPP) with a corresponding release of cytidine 5-monophosphate (CMP). This Prochlorococcus marinus (strain MIT 9215) protein is 2-C-methyl-D-erythritol 2,4-cyclodiphosphate synthase.